The chain runs to 842 residues: Circularly permutated Ras protein 1 (842 aa).

GTP contacts are provided by residues 62–66 (DTAGQ), 121–124 (NKVD), and 181–188 (GGGGVGKS). The tract at residues 253-274 (SGKDKQPSPQQAASPSTIDRTG) is disordered. Residues 259–274 (PSPQQAASPSTIDRTG) show a composition bias toward polar residues. Residues 377 to 627 (IIIYCIDVSG…TQNPMIATDV (251 aa)) form the VWFA domain.

It belongs to the small GTPase superfamily. CpRas family.

The polypeptide is Circularly permutated Ras protein 1 (cpras1) (Dictyostelium discoideum (Social amoeba)).